Consider the following 157-residue polypeptide: Small ribosomal subunit protein uS7 (157 aa).

Belongs to the universal ribosomal protein uS7 family. In terms of assembly, part of the 30S ribosomal subunit. Contacts proteins S9 and S11.

One of the primary rRNA binding proteins, it binds directly to 16S rRNA where it nucleates assembly of the head domain of the 30S subunit. Is located at the subunit interface close to the decoding center, probably blocks exit of the E-site tRNA. This chain is Small ribosomal subunit protein uS7, found in Bdellovibrio bacteriovorus (strain ATCC 15356 / DSM 50701 / NCIMB 9529 / HD100).